We begin with the raw amino-acid sequence, 1019 residues long: Photoactivated adenylate cyclase subunit alpha-like protein ST- (1019 aa).

Residues 55–148 (LRRLMYLSAS…GRMYGEWHMK (94 aa)) form the BLUF 1 domain. The 129-residue stretch at 204 to 332 (VLTFIYLVEF…DCINTASRIT (129 aa)) folds into the Guanylate cyclase 1 domain. The region spanning 467-559 (LITLTYISQA…RVYGTPLDMT (93 aa)) is the BLUF 2 domain. One can recognise a Guanylate cyclase 2 domain in the interval 615-744 (VMLATDICSF…EVSARVMAVE (130 aa)). Disordered regions lie at residues 801–846 (EDHL…TRPH), 887–923 (QIAA…DQPA), and 963–993 (EGHR…NRAT). Over residues 821-834 (RHQRPGPGRPRRGH) the composition is skewed to basic residues.

This sequence belongs to the adenylyl cyclase class-4/guanylyl cyclase family. In terms of assembly, heterotetramer of two alpha and two beta subunits.

It is found in the cell projection. Its subcellular location is the cilium. The protein resides in the flagellum. The polypeptide is Photoactivated adenylate cyclase subunit alpha-like protein ST- (Euglena gracilis).